The primary structure comprises 213 residues: High frequency lysogenization protein HflD (213 aa).

A coiled-coil region spans residues 99–126; sequence LSSAKGALDTLGNRINGLQRQLEHFDLQ.

Belongs to the HflD family. As to quaternary structure, interacts with CII protein from phage lambda.

It is found in the cytoplasm. It localises to the cell inner membrane. In terms of biological role, negative regulator of phage lambda lysogenization. Contributes to the degradation of the phage regulatory protein CII. Acts probably by holding CII on the membrane surface, away from the target promoters, but close to the FtsH protease. The polypeptide is High frequency lysogenization protein HflD (Escherichia coli O157:H7).